Here is a 347-residue protein sequence, read N- to C-terminus: Queuosine 5'-phosphate N-glycosylase/hydrolase (347 aa).

Queuine contacts are provided by His53, Phe237, Asp239, Asp321, and Asp326. The active-site Nucleophile or transition state stabilizer is the Asp239.

The protein belongs to the QNG1 protein family.

The catalysed reaction is queuosine 5'-phosphate + H2O = queuine + D-ribose 5-phosphate. Functionally, catalyzes the hydrolysis of queuosine 5'-phosphate, releasing the nucleobase queuine (q). Is required for salvage of queuine from exogenous queuosine (Q) that is imported and then converted to queuosine 5'-phosphate intracellularly. The sequence is that of Queuosine 5'-phosphate N-glycosylase/hydrolase from Nematostella vectensis (Starlet sea anemone).